Here is a 274-residue protein sequence, read N- to C-terminus: Large ribosomal subunit protein uL2 (274 aa).

The segment at 223-274 (VVMNPVDHPHGGGEGRTSGGRHPVSPWGVPTKGFKTRKNKRTDKYIVRRRTK) is disordered. The span at 256–274 (FKTRKNKRTDKYIVRRRTK) shows a compositional bias: basic residues.

This sequence belongs to the universal ribosomal protein uL2 family. In terms of assembly, part of the 50S ribosomal subunit. Forms a bridge to the 30S subunit in the 70S ribosome.

Its function is as follows. One of the primary rRNA binding proteins. Required for association of the 30S and 50S subunits to form the 70S ribosome, for tRNA binding and peptide bond formation. It has been suggested to have peptidyltransferase activity; this is somewhat controversial. Makes several contacts with the 16S rRNA in the 70S ribosome. In Vibrio atlanticus (strain LGP32) (Vibrio splendidus (strain Mel32)), this protein is Large ribosomal subunit protein uL2.